A 97-amino-acid chain; its full sequence is Aspartyl/glutamyl-tRNA(Asn/Gln) amidotransferase subunit C (97 aa).

This sequence belongs to the GatC family. As to quaternary structure, heterotrimer of A, B and C subunits.

It catalyses the reaction L-glutamyl-tRNA(Gln) + L-glutamine + ATP + H2O = L-glutaminyl-tRNA(Gln) + L-glutamate + ADP + phosphate + H(+). It carries out the reaction L-aspartyl-tRNA(Asn) + L-glutamine + ATP + H2O = L-asparaginyl-tRNA(Asn) + L-glutamate + ADP + phosphate + 2 H(+). Functionally, allows the formation of correctly charged Asn-tRNA(Asn) or Gln-tRNA(Gln) through the transamidation of misacylated Asp-tRNA(Asn) or Glu-tRNA(Gln) in organisms which lack either or both of asparaginyl-tRNA or glutaminyl-tRNA synthetases. The reaction takes place in the presence of glutamine and ATP through an activated phospho-Asp-tRNA(Asn) or phospho-Glu-tRNA(Gln). In Anaeromyxobacter sp. (strain K), this protein is Aspartyl/glutamyl-tRNA(Asn/Gln) amidotransferase subunit C.